The following is a 308-amino-acid chain: Ribosomal RNA small subunit methyltransferase H (308 aa).

S-adenosyl-L-methionine contacts are provided by residues 34 to 36 (GGH), D54, F80, D101, and Q108.

Belongs to the methyltransferase superfamily. RsmH family.

Its subcellular location is the cytoplasm. It catalyses the reaction cytidine(1402) in 16S rRNA + S-adenosyl-L-methionine = N(4)-methylcytidine(1402) in 16S rRNA + S-adenosyl-L-homocysteine + H(+). Functionally, specifically methylates the N4 position of cytidine in position 1402 (C1402) of 16S rRNA. In Ureaplasma parvum serovar 3 (strain ATCC 27815 / 27 / NCTC 11736), this protein is Ribosomal RNA small subunit methyltransferase H.